Consider the following 276-residue polypeptide: Rhomboid protease GlpG (276 aa).

6 consecutive transmembrane segments (helical) span residues Gly94–Leu114, Ala142–Gly162, Leu169–Gln189, Phe192–Trp212, Leu229–Met249, and Ala250–Leu270. Ser201 acts as the Nucleophile in catalysis. Residue His254 is part of the active site.

The protein belongs to the peptidase S54 family.

Its subcellular location is the cell inner membrane. It carries out the reaction Cleaves type-1 transmembrane domains using a catalytic dyad composed of serine and histidine that are contributed by different transmembrane domains.. Functionally, rhomboid-type serine protease that catalyzes intramembrane proteolysis. In Escherichia coli O45:K1 (strain S88 / ExPEC), this protein is Rhomboid protease GlpG.